We begin with the raw amino-acid sequence, 349 residues long: MATATLSIDLDAIAANWRALDRASNRRVATGAVVKADGYGLDAGRVARTLAQAGARQFFVAVAEEGVTLRKALGPGPAINVFSGHMEGDTQAIAGARLTPMINSAEQLARHFEALPRHPFGIQLDTGMNRLGMEADEWAAVAEFALGQGPKLVMSHLACADEPGHAANAAQLAEFHRLTDGITVPRSLSATGGILLGEAYHFDMTRPGIGLYGGAPFGAAEPVVRLSIPVVQVRAVTAGESVGYGCSWVAQSDGAIATLSAGYADGLIRAMSNRAMLYAGDVACPLAGRVSMDLLTVDVSHLDEVPEALDLLCPAQGVDRLAEAAGTIGYEILTSLGPRYARHYAGGVA.

Lys35 acts as the Proton acceptor; specific for D-alanine in catalysis. Lys35 bears the N6-(pyridoxal phosphate)lysine mark. Arg130 contacts substrate. Tyr244 (proton acceptor; specific for L-alanine) is an active-site residue. Met292 lines the substrate pocket.

This sequence belongs to the alanine racemase family. The cofactor is pyridoxal 5'-phosphate.

It carries out the reaction L-alanine = D-alanine. It participates in amino-acid biosynthesis; D-alanine biosynthesis; D-alanine from L-alanine: step 1/1. In terms of biological role, catalyzes the interconversion of L-alanine and D-alanine. May also act on other amino acids. The polypeptide is Alanine racemase (alr) (Dinoroseobacter shibae (strain DSM 16493 / NCIMB 14021 / DFL 12)).